A 343-amino-acid chain; its full sequence is Ferredoxin--NADP reductase (343 aa).

FAD is bound by residues D31, K39, Y43, V83, I118, D285, and S326.

It belongs to the ferredoxin--NADP reductase type 2 family. In terms of assembly, homodimer. FAD is required as a cofactor.

It catalyses the reaction 2 reduced [2Fe-2S]-[ferredoxin] + NADP(+) + H(+) = 2 oxidized [2Fe-2S]-[ferredoxin] + NADPH. The sequence is that of Ferredoxin--NADP reductase from Staphylococcus saprophyticus subsp. saprophyticus (strain ATCC 15305 / DSM 20229 / NCIMB 8711 / NCTC 7292 / S-41).